Reading from the N-terminus, the 31-residue chain is Photosystem I reaction center subunit XII (31 aa).

Residues 7-26 (QVYIALLTALIPAFFALKLG) form a helical membrane-spanning segment.

The protein belongs to the PsaM family.

It localises to the plastid. The protein resides in the chloroplast thylakoid membrane. The chain is Photosystem I reaction center subunit XII from Euglena viridis (Cercaria viridis).